A 230-amino-acid chain; its full sequence is UPF0758 protein plu4865 (230 aa).

Positions 108–230 (IMSSPSVTQE…CVSFAERGWI (123 aa)) constitute an MPN domain. Positions 179, 181, and 192 each coordinate Zn(2+). A JAMM motif motif is present at residues 179-192 (HNHPSGHAEPSLAD).

This sequence belongs to the UPF0758 family. YicR subfamily.

This Photorhabdus laumondii subsp. laumondii (strain DSM 15139 / CIP 105565 / TT01) (Photorhabdus luminescens subsp. laumondii) protein is UPF0758 protein plu4865.